The sequence spans 229 residues: Transmembrane emp24 domain-containing protein 5 (229 aa).

Residues 1–27 (MGDKIWLPFPVLLLAALPPVLLPGAAG) form the signal peptide. Topologically, residues 28 to 196 (FTPSLDSDFT…IQESNFDRVN (169 aa)) are lumenal. Residues 45 to 126 (KECFYQPMPL…EKVIFFELIL (82 aa)) enclose the GOLD domain. A helical transmembrane segment spans residues 197–217 (FWSMVNLVVMVVVSAIQVYML). At 218–229 (KSLFEDKRKSRT) the chain is on the cytoplasmic side.

It belongs to the EMP24/GP25L family. As to quaternary structure, interacts with TMED9 and TMED10.

The protein resides in the endoplasmic reticulum membrane. The protein localises to the golgi apparatus. It localises to the cis-Golgi network membrane. Its subcellular location is the endoplasmic reticulum-Golgi intermediate compartment membrane. In terms of biological role, potential role in vesicular protein trafficking, mainly in the early secretory pathway. Required for the maintenance of the Golgi apparatus; involved in protein exchange between Golgi stacks during assembly. Probably not required for COPI-vesicle-mediated retrograde transport. This Homo sapiens (Human) protein is Transmembrane emp24 domain-containing protein 5 (TMED5).